The sequence spans 1381 residues: Hepatocyte growth factor receptor (1381 aa).

Residues 1-24 (MKAPAVLAPGILVLLFTLVQRSNG) form the signal peptide. Residues 25–932 (ECKEALAKSE…VIVQPDQNFT (908 aa)) are Extracellular-facing. In terms of domain architecture, Sema spans 27-515 (KEALAKSEMN…TGKKITKIPL (489 aa)). Asparagine 45 is a glycosylation site (N-linked (GlcNAc...) asparagine). 4 disulfide bridges follow: cysteine 95/cysteine 101, cysteine 98/cysteine 160, cysteine 133/cysteine 141, and cysteine 172/cysteine 175. A glycan (N-linked (GlcNAc...) asparagine) is linked at asparagine 106. A glycan (N-linked (GlcNAc...) asparagine) is linked at asparagine 149. Asparagine 202 is a glycosylation site (N-linked (GlcNAc...) asparagine). 2 cysteine pairs are disulfide-bonded: cysteine 298/cysteine 363 and cysteine 385/cysteine 397. Residues asparagine 399 and asparagine 405 are each glycosylated (N-linked (GlcNAc...) asparagine). 4 cysteine pairs are disulfide-bonded: cysteine 520/cysteine 538, cysteine 526/cysteine 561, cysteine 529/cysteine 545, and cysteine 541/cysteine 551. IPT/TIG domains lie at 563-655 (PAIY…FSYV), 657-739 (PIIT…FSYR), and 742-836 (PIVY…LIYV). Threonine 582 carries an O-linked (Man) threonine glycan. 2 N-linked (GlcNAc...) asparagine glycosylation sites follow: asparagine 607 and asparagine 635. O-linked (Man) threonine glycans are attached at residues threonine 676 and threonine 761. N-linked (GlcNAc...) asparagine glycosylation is found at asparagine 785, asparagine 879, and asparagine 930. A helical membrane pass occupies residues 933–955 (GLIAGVVSISIALLLLLGLFLWL). Residues 956 to 1381 (KKRKQIKDLG…EDNADDEVDT (426 aa)) are Cytoplasmic-facing. Position 966 is a phosphoserine (serine 966). Threonine 977 bears the Phosphothreonine mark. 3 positions are modified to phosphoserine: serine 990, serine 997, and serine 1000. Tyrosine 1003 carries the phosphotyrosine modification. The Protein kinase domain occupies 1078–1345 (VHFNEVIGRG…RISAIFSTFI (268 aa)). ATP-binding positions include 1084 to 1092 (IGRGHFGCV) and lysine 1110. The active-site Proton acceptor is the aspartate 1204. Residues 1212 to 1381 (LDEKFTVKVA…EDNADDEVDT (170 aa)) form an interaction with RANBP9 region. Residue tyrosine 1230 is modified to Phosphotyrosine. Tyrosine 1234 and tyrosine 1235 each carry phosphotyrosine; by autocatalysis. A Phosphothreonine modification is found at threonine 1289. Residues 1320–1359 (WHPKAEMRPSFSELVSRISAIFSTFIGEHYVHVNATYVNV) are interaction with MUC20. A phosphotyrosine; by autocatalysis mark is found at tyrosine 1349 and tyrosine 1356. Tyrosine 1365 is modified (phosphotyrosine).

The protein belongs to the protein kinase superfamily. Tyr protein kinase family. In terms of assembly, heterodimer made of an alpha chain (50 kDa) and a beta chain (145 kDa) which are disulfide linked. Binds PLXNB1. Interacts when phosphorylated with downstream effectors including STAT3, PIK3R1, SRC, PCLG1, GRB2 and GAB1. Interacts with SPSB1, SPSB2 and SPSB4. Interacts with INPP5D/SHIP1. When phosphorylated at Tyr-1356, interacts with INPPL1/SHIP2. Interacts with RANBP9 and RANBP10, as well as SPSB1, SPSB2, SPSB3 and SPSB4. SPSB1 binding occurs in the presence and in the absence of HGF, however HGF treatment has a positive effect on this interaction. Interacts with MUC20; prevents interaction with GRB2 and suppresses hepatocyte growth factor-induced cell proliferation. Interacts with GRB10. Interacts with PTPN1 and PTPN2. Interacts with HSP90AA1 and HSP90AB1; the interaction suppresses MET kinase activity. Interacts with tensin TNS3. Interacts (when phosphorylated) with tensin TNS4 (via SH2 domain); the interaction increases MET protein stability by inhibiting MET endocytosis and subsequent lysosomal degradation. In terms of processing, autophosphorylated in response to ligand binding on Tyr-1234 and Tyr-1235 in the kinase domain leading to further phosphorylation of Tyr-1349 and Tyr-1356 in the C-terminal multifunctional docking site. Dephosphorylated by PTPRJ at Tyr-1349 and Tyr-1365. Dephosphorylated by PTPN1 and PTPN2. Post-translationally, ubiquitinated. Ubiquitination by CBL regulates the receptor stability and activity through proteasomal degradation. O-mannosylation of IPT/TIG domains by TMEM260 is required for protein maturation. O-mannosylated residues are composed of single mannose glycans that are not elongated or modified.

The protein resides in the membrane. It carries out the reaction L-tyrosyl-[protein] + ATP = O-phospho-L-tyrosyl-[protein] + ADP + H(+). With respect to regulation, in its inactive state, the C-terminal tail interacts with the catalytic domain and inhibits the kinase activity. Upon ligand binding, the C-terminal tail is displaced and becomes phosphorylated, thus increasing the kinase activity. Functionally, receptor tyrosine kinase that transduces signals from the extracellular matrix into the cytoplasm by binding to hepatocyte growth factor/HGF ligand. Regulates many physiological processes including proliferation, scattering, morphogenesis and survival. Ligand binding at the cell surface induces autophosphorylation of MET on its intracellular domain that provides docking sites for downstream signaling molecules. Following activation by ligand, interacts with the PI3-kinase subunit PIK3R1, PLCG1, SRC, GRB2, STAT3 or the adapter GAB1. Recruitment of these downstream effectors by MET leads to the activation of several signaling cascades including the RAS-ERK, PI3 kinase-AKT, or PLCgamma-PKC. The RAS-ERK activation is associated with the morphogenetic effects while PI3K/AKT coordinates prosurvival effects. During embryonic development, MET signaling plays a role in gastrulation, development and migration of muscles and neuronal precursors, angiogenesis and kidney formation. In adults, participates in wound healing as well as organ regeneration and tissue remodeling. Also promotes differentiation and proliferation of hematopoietic cells. This is Hepatocyte growth factor receptor (MET) from Colobus guereza (Mantled guereza).